Here is a 339-residue protein sequence, read N- to C-terminus: Lipoyl synthase (339 aa).

The disordered stretch occupies residues 13–35 (RPKLDAPARPRHPEKAHRPDTAI). Residues Cys68, Cys73, Cys79, Cys94, Cys98, Cys101, and Ser307 each contribute to the [4Fe-4S] cluster site. A Radical SAM core domain is found at 80 to 296 (WEKRHATFMI…ETTAYAKGFL (217 aa)).

This sequence belongs to the radical SAM superfamily. Lipoyl synthase family. [4Fe-4S] cluster is required as a cofactor.

It localises to the cytoplasm. It catalyses the reaction [[Fe-S] cluster scaffold protein carrying a second [4Fe-4S](2+) cluster] + N(6)-octanoyl-L-lysyl-[protein] + 2 oxidized [2Fe-2S]-[ferredoxin] + 2 S-adenosyl-L-methionine + 4 H(+) = [[Fe-S] cluster scaffold protein] + N(6)-[(R)-dihydrolipoyl]-L-lysyl-[protein] + 4 Fe(3+) + 2 hydrogen sulfide + 2 5'-deoxyadenosine + 2 L-methionine + 2 reduced [2Fe-2S]-[ferredoxin]. It participates in protein modification; protein lipoylation via endogenous pathway; protein N(6)-(lipoyl)lysine from octanoyl-[acyl-carrier-protein]: step 2/2. Functionally, catalyzes the radical-mediated insertion of two sulfur atoms into the C-6 and C-8 positions of the octanoyl moiety bound to the lipoyl domains of lipoate-dependent enzymes, thereby converting the octanoylated domains into lipoylated derivatives. This chain is Lipoyl synthase, found in Methylorubrum extorquens (strain CM4 / NCIMB 13688) (Methylobacterium extorquens).